Consider the following 348-residue polypeptide: Uroporphyrinogen decarboxylase (348 aa).

Residues 29–33 (RQAGR), aspartate 79, tyrosine 155, threonine 210, and histidine 326 each bind substrate.

This sequence belongs to the uroporphyrinogen decarboxylase family. As to quaternary structure, homodimer.

It localises to the cytoplasm. The enzyme catalyses uroporphyrinogen III + 4 H(+) = coproporphyrinogen III + 4 CO2. It participates in porphyrin-containing compound metabolism; protoporphyrin-IX biosynthesis; coproporphyrinogen-III from 5-aminolevulinate: step 4/4. Catalyzes the decarboxylation of four acetate groups of uroporphyrinogen-III to yield coproporphyrinogen-III. The chain is Uroporphyrinogen decarboxylase from Rhodospirillum rubrum (strain ATCC 11170 / ATH 1.1.1 / DSM 467 / LMG 4362 / NCIMB 8255 / S1).